A 294-amino-acid polypeptide reads, in one-letter code: Cytidine deaminase (294 aa).

CMP/dCMP-type deaminase domains follow at residues 48 to 168 (DEDA…FGPK) and 186 to 294 (LTGN…VLLG). 89 to 91 (NME) provides a ligand contact to substrate. H102 provides a ligand contact to Zn(2+). E104 (proton donor) is an active-site residue. 2 residues coordinate Zn(2+): C129 and C132.

The protein belongs to the cytidine and deoxycytidylate deaminase family. As to quaternary structure, homodimer. Zn(2+) serves as cofactor.

It carries out the reaction cytidine + H2O + H(+) = uridine + NH4(+). The catalysed reaction is 2'-deoxycytidine + H2O + H(+) = 2'-deoxyuridine + NH4(+). Functionally, this enzyme scavenges exogenous and endogenous cytidine and 2'-deoxycytidine for UMP synthesis. This chain is Cytidine deaminase, found in Salmonella typhi.